We begin with the raw amino-acid sequence, 142 residues long: Hemoglobin subunit alpha-A (142 aa).

Positions 2–142 constitute a Globin domain; it reads VLSAADKNNV…VGTVLTAKYR (141 aa). Position 59 (His-59) interacts with O2. Position 88 (His-88) interacts with heme b.

It belongs to the globin family. In terms of assembly, heterotetramer of two alpha chains and two beta chains. As to expression, red blood cells.

In terms of biological role, involved in oxygen transport from the lung to the various peripheral tissues. This Gallus gallus (Chicken) protein is Hemoglobin subunit alpha-A (HBAA).